We begin with the raw amino-acid sequence, 664 residues long: Metal-nicotianamine transporter YSL2 (664 aa).

A run of 14 helical transmembrane segments spans residues 31–51 (ITVRAIVASLLIGIVYSVICL), 55–75 (LTTGLVPNLNISSALLAFVFL), 103–123 (CAVACYSISLAGGFASYLLGL), 147–167 (GVGWMTSFLFVTSFIGLVVLV), 209–229 (GFIKSFGLSFFWAFFGWFYSG), 268–288 (LVNLSLLFGAILSWGIMWPLI), 314–334 (FICIALILGDGLYNFVKILFF), 378–398 (IPLWMACVGYLFFSLVSIIAI), 409–429 (FVLVAYLLAPSLSFCNAYGAG), 457–477 (VVAGMVACGLIKSIVSVSADL), 496–516 (VAQAIGTAIGCVVAPLTFFLF), 549–569 (SALPKHCLELCYGFFAFAVAA), 594–614 (FLVGGSFAIDMCIGSLVVYVW), and 629–649 (VASGLICGDGLWILPSSLLAL).

Belongs to the YSL (TC 2.A.67.2) family. In terms of tissue distribution, expressed in roots, leaves and weakly in shoots. Restricted to the veins, to the central cylinder of the young roots and to the pericycle and the endodermis cells facing the meta-xylem tubes in older roots. Expressed in the vasculature of sepals, petals, anthers, stigma and siliques, but not in developing seeds or in meristematic zones.

The protein localises to the cell membrane. Functionally, may be involved in the lateral transport of nicotianamine-chelated metals in the vasculature. In Arabidopsis thaliana (Mouse-ear cress), this protein is Metal-nicotianamine transporter YSL2 (YSL2).